The chain runs to 354 residues: NADH-quinone oxidoreductase subunit H (354 aa).

The next 8 membrane-spanning stretches (helical) occupy residues 22–42 (ILIR…YLIL), 91–111 (YLVA…VIPF), 124–144 (LLYV…AGWA), 162–182 (VSYE…SGSL), 203–223 (LLSW…ISGV), 250–270 (GMTF…ISTM), 291–311 (IPGF…FIWI), and 326–346 (LGWK…AIWI).

The protein belongs to the complex I subunit 1 family. NDH-1 is composed of 14 different subunits. Subunits NuoA, H, J, K, L, M, N constitute the membrane sector of the complex.

The protein resides in the cell inner membrane. The catalysed reaction is a quinone + NADH + 5 H(+)(in) = a quinol + NAD(+) + 4 H(+)(out). Its function is as follows. NDH-1 shuttles electrons from NADH, via FMN and iron-sulfur (Fe-S) centers, to quinones in the respiratory chain. The immediate electron acceptor for the enzyme in this species is believed to be ubiquinone. Couples the redox reaction to proton translocation (for every two electrons transferred, four hydrogen ions are translocated across the cytoplasmic membrane), and thus conserves the redox energy in a proton gradient. This subunit may bind ubiquinone. This Cupriavidus metallidurans (strain ATCC 43123 / DSM 2839 / NBRC 102507 / CH34) (Ralstonia metallidurans) protein is NADH-quinone oxidoreductase subunit H.